The sequence spans 336 residues: D-erythrose-4-phosphate dehydrogenase (336 aa).

11–12 serves as a coordination point for NAD(+); sequence RI. Residues 153–155, Arg199, 212–213, and Arg235 each bind substrate; these read SCT and TR. The Nucleophile role is filled by Cys154. Asn317 is a binding site for NAD(+).

Belongs to the glyceraldehyde-3-phosphate dehydrogenase family. Epd subfamily. Homotetramer.

Its subcellular location is the cytoplasm. The catalysed reaction is D-erythrose 4-phosphate + NAD(+) + H2O = 4-phospho-D-erythronate + NADH + 2 H(+). It functions in the pathway cofactor biosynthesis; pyridoxine 5'-phosphate biosynthesis; pyridoxine 5'-phosphate from D-erythrose 4-phosphate: step 1/5. Its function is as follows. Catalyzes the NAD-dependent conversion of D-erythrose 4-phosphate to 4-phosphoerythronate. The polypeptide is D-erythrose-4-phosphate dehydrogenase (Alteromonas mediterranea (strain DSM 17117 / CIP 110805 / LMG 28347 / Deep ecotype)).